We begin with the raw amino-acid sequence, 189 residues long: Penicillin-binding protein activator LpoB (189 aa).

A signal peptide spans 1–16 (MRRILFVALSVMFLAG). The N-palmitoyl cysteine moiety is linked to residue Cys-17. The S-diacylglycerol cysteine moiety is linked to residue Cys-17. The tract at residues 18-52 (PSLPPEQPEPPTPVVPVTPSEKPTPPSEKVPEPPK) is disordered. The span at 19–45 (SLPPEQPEPPTPVVPVTPSEKPTPPSE) shows a compositional bias: pro residues.

Belongs to the LpoB family. As to quaternary structure, interacts with PBP1b.

It is found in the cell outer membrane. In terms of biological role, regulator of peptidoglycan synthesis that is essential for the function of penicillin-binding protein 1B (PBP1b). The protein is Penicillin-binding protein activator LpoB of Photorhabdus laumondii subsp. laumondii (strain DSM 15139 / CIP 105565 / TT01) (Photorhabdus luminescens subsp. laumondii).